A 669-amino-acid chain; its full sequence is RNA-binding protein 14 (669 aa).

RRM domains follow at residues 1-73 and 79-149; these read MKIF…MSRP and WKIF…LSTK. Glycyl lysine isopeptide (Lys-Gly) (interchain with G-Cter in SUMO2) cross-links involve residues Lys-126, Lys-135, Lys-138, Lys-149, and Lys-153. Disordered regions lie at residues 147–175 and 193–232; these read STKG…DTAF and NSTG…PLTA. Ser-161 is modified (phosphoserine). The residue at position 164 (Lys-164) is an N6-acetyllysine; alternate. A Glycyl lysine isopeptide (Lys-Gly) (interchain with G-Cter in SUMO2); alternate cross-link involves residue Lys-164. Thr-206 carries the phosphothreonine modification. Phosphoserine occurs at positions 220, 242, 244, 256, 272, and 280. A disordered region spans residues 284-303; the sequence is PYRGQLASPSSQSAAASSLG. The span at 287 to 303 shows a compositional bias: low complexity; it reads GQLASPSSQSAAASSLG. The segment at 307–354 is TRBP-interacting domain; interaction with STIL; sequence GAQPSASALSSYGGQAAAASSLNSYGAQGSSLASYGNQPSSYGAQAAS. Phosphoserine is present on residues Ser-520, Ser-523, Ser-527, and Ser-562. Residues 566 to 590 are disordered; that stretch reads VANANSTPPPYERTRLSPPRASYDD. Thr-572 carries the post-translational modification Phosphothreonine. The residue at position 582 (Ser-582) is a Phosphoserine. Residue Lys-600 forms a Glycyl lysine isopeptide (Lys-Gly) (interchain with G-Cter in SUMO2) linkage. 6 positions are modified to phosphoserine: Ser-618, Ser-620, Ser-623, Ser-627, Ser-643, and Ser-649.

As to quaternary structure, isoform 1: Interacts with NCOA6, CITED1 and XRCC5/KU86. Isoform 1: Interacts with SS18 isoform 1. Isoform 1: Interacts with SS18 isoform 2. Interacts with STIL and interferes with its interaction with CPAP. Interacts with gamma-tubulin. Part of the HDP-RNP complex composed of at least HEXIM1, PRKDC, XRCC5, XRCC6, paraspeckle proteins (SFPQ, NONO, PSPC1, RBM14, and MATR3) and NEAT1 RNA. Interacts with RBPMS; the interaction allows cooperative assembly of RNA-bound stable cell-specific alternative splicing regulatory complexes. As to expression, expressed in all tissues tested, including brain, heart, skeletal muscle, colon, thymus, spleen, kidney, liver, small intestine, placenta, lung and peripheral blood lymphocytes.

The protein localises to the nucleus. It is found in the nucleolus. The protein resides in the cytoplasm. Functionally, isoform 1 may function as a nuclear receptor coactivator, enhancing transcription through other coactivators such as NCOA6 and CITED1. Isoform 2, functions as a transcriptional repressor, modulating transcriptional activities of coactivators including isoform 1, NCOA6 and CITED1. Regulates centriole biogenesis by suppressing the formation of aberrant centriolar protein complexes in the cytoplasm and thus preserving mitotic spindle integrity. Prevents the formation of the STIL-CPAP complex (which can induce the formation of aberrant centriolar protein complexes) by interfering with the interaction of STIL with CPAP. Plays a role in the regulation of DNA virus-mediated innate immune response by assembling into the HDP-RNP complex, a complex that serves as a platform for IRF3 phosphorylation and subsequent innate immune response activation through the cGAS-STING pathway. Also involved in the regulation of pre-mRNA alternative splicing. This is RNA-binding protein 14 (RBM14) from Homo sapiens (Human).